Reading from the N-terminus, the 363-residue chain is 3-isopropylmalate dehydrogenase (363 aa).

NAD(+) is bound at residue 78 to 91 (GKKWDTLPINERPE). Residues arginine 99, arginine 109, arginine 138, and aspartate 227 each coordinate substrate. The Mg(2+) site is built by aspartate 227, aspartate 251, and aspartate 255. 285 to 297 (GSAPDIQGKNIAN) is a binding site for NAD(+).

The protein belongs to the isocitrate and isopropylmalate dehydrogenases family. LeuB type 1 subfamily. In terms of assembly, homodimer. Mg(2+) is required as a cofactor. The cofactor is Mn(2+).

It is found in the cytoplasm. The enzyme catalyses (2R,3S)-3-isopropylmalate + NAD(+) = 4-methyl-2-oxopentanoate + CO2 + NADH. The protein operates within amino-acid biosynthesis; L-leucine biosynthesis; L-leucine from 3-methyl-2-oxobutanoate: step 3/4. Its function is as follows. Catalyzes the oxidation of 3-carboxy-2-hydroxy-4-methylpentanoate (3-isopropylmalate) to 3-carboxy-4-methyl-2-oxopentanoate. The product decarboxylates to 4-methyl-2 oxopentanoate. In Buchnera aphidicola subsp. Diuraphis noxia, this protein is 3-isopropylmalate dehydrogenase.